Reading from the N-terminus, the 562-residue chain is Arginine--tRNA ligase (562 aa).

The 'HIGH' region motif lies at 129 to 139 (ANPTGPLHVGH).

The protein belongs to the class-I aminoacyl-tRNA synthetase family. In terms of assembly, monomer.

It is found in the cytoplasm. The enzyme catalyses tRNA(Arg) + L-arginine + ATP = L-arginyl-tRNA(Arg) + AMP + diphosphate. The protein is Arginine--tRNA ligase of Xanthomonas oryzae pv. oryzae (strain MAFF 311018).